Consider the following 157-residue polypeptide: ATP synthase subunit b', chloroplastic (157 aa).

Residues 26–43 form a helical membrane-spanning segment; it reads LMASQFLLIMLILDITFY.

This sequence belongs to the ATPase B chain family. F-type ATPases have 2 components, F(1) - the catalytic core - and F(0) - the membrane proton channel. F(1) has five subunits: alpha(3), beta(3), gamma(1), delta(1), epsilon(1). F(0) has four main subunits: a(1), b(1), b'(1) and c(10-14). The alpha and beta chains form an alternating ring which encloses part of the gamma chain. F(1) is attached to F(0) by a central stalk formed by the gamma and epsilon chains, while a peripheral stalk is formed by the delta, b and b' chains.

Its subcellular location is the plastid. The protein localises to the chloroplast thylakoid membrane. Its function is as follows. F(1)F(0) ATP synthase produces ATP from ADP in the presence of a proton or sodium gradient. F-type ATPases consist of two structural domains, F(1) containing the extramembraneous catalytic core and F(0) containing the membrane proton channel, linked together by a central stalk and a peripheral stalk. During catalysis, ATP synthesis in the catalytic domain of F(1) is coupled via a rotary mechanism of the central stalk subunits to proton translocation. Functionally, component of the F(0) channel, it forms part of the peripheral stalk, linking F(1) to F(0). The b'-subunit is a diverged and duplicated form of b found in plants and photosynthetic bacteria. The chain is ATP synthase subunit b', chloroplastic from Cyanidium caldarium (Red alga).